We begin with the raw amino-acid sequence, 79 residues long: Serine protease inhibitor Kazal-type 1-like (79 aa).

The first 23 residues, 1 to 23 (MKVAIIFLLSALALLNLAGNTTA), serve as a signal peptide directing secretion. One can recognise a Kazal-like domain in the interval 26-79 (IGKKANCPNTLVGCPRDYDPVCGTDGKTYANECILCFENRKFGTSIRIQRRGLC). 3 disulfides stabilise this stretch: Cys-32-Cys-61, Cys-39-Cys-58, and Cys-47-Cys-79.

Seminal vesicle.

The protein resides in the secreted. Functionally, serine protease inhibitor which exhibits anti-trypsin activity. In the pancreas, protects against trypsin-catalyzed premature activation of zymogens. Its function is as follows. In the male reproductive tract, binds to sperm heads where it modulates sperm capacitance by inhibiting calcium uptake and nitrogen oxide (NO) production. This Rattus norvegicus (Rat) protein is Serine protease inhibitor Kazal-type 1-like.